A 299-amino-acid polypeptide reads, in one-letter code: 4-diphosphocytidyl-2-C-methyl-D-erythritol kinase (299 aa).

The active site involves Lys11. 94–104 (PQGGGLGGGSS) provides a ligand contact to ATP. Residue Asp136 is part of the active site.

The protein belongs to the GHMP kinase family. IspE subfamily.

It carries out the reaction 4-CDP-2-C-methyl-D-erythritol + ATP = 4-CDP-2-C-methyl-D-erythritol 2-phosphate + ADP + H(+). Its pathway is isoprenoid biosynthesis; isopentenyl diphosphate biosynthesis via DXP pathway; isopentenyl diphosphate from 1-deoxy-D-xylulose 5-phosphate: step 3/6. Functionally, catalyzes the phosphorylation of the position 2 hydroxy group of 4-diphosphocytidyl-2C-methyl-D-erythritol. This is 4-diphosphocytidyl-2-C-methyl-D-erythritol kinase from Bordetella pertussis (strain Tohama I / ATCC BAA-589 / NCTC 13251).